A 227-amino-acid polypeptide reads, in one-letter code: Small ribosomal subunit protein uS3 (227 aa).

Residues I39–D109 enclose the KH type-2 domain.

This sequence belongs to the universal ribosomal protein uS3 family. In terms of assembly, part of the 30S ribosomal subunit. Forms a tight complex with proteins S10 and S14.

Binds the lower part of the 30S subunit head. Binds mRNA in the 70S ribosome, positioning it for translation. The sequence is that of Small ribosomal subunit protein uS3 from Mesomycoplasma hyopneumoniae (strain 232) (Mycoplasma hyopneumoniae).